The primary structure comprises 156 residues: Protein CROC-4 (156 aa).

The tract at residues 46–71 (RATSSTTDSSRAPSSPRPPGSTSHCG) is disordered. Positions 48 to 59 (TSSTTDSSRAPS) are enriched in low complexity.

In terms of tissue distribution, expressed throughout the brain in the thalamus, subthalamic nucleus, corpus callosum, hippocampus, substantia nigra, caudate nucleus, and amygdala.

Its subcellular location is the nucleus. Its function is as follows. May play a role in FOS signaling pathways involved in development and remodeling of neurons. Promotes transcription of the FOS promoter. In Homo sapiens (Human), this protein is Protein CROC-4.